A 355-amino-acid polypeptide reads, in one-letter code: Proto-oncogene Wnt-3 (355 aa).

Positions 1 to 21 (MEPHLLGLLLGLLLSGTRVLA) are cleaved as a signal peptide. Disulfide bonds link C80–C91, C131–C139, C141–C158, C206–C220, C208–C215, C284–C315, C300–C310, C314–C354, C330–C345, C332–C342, and C337–C338. N90 carries an N-linked (GlcNAc...) asparagine glycan. The O-palmitoleoyl serine; by PORCN moiety is linked to residue S212. A glycan (N-linked (GlcNAc...) asparagine) is linked at N301.

It belongs to the Wnt family. In terms of assembly, forms a soluble 1:1 complex with AFM; this prevents oligomerization and is required for prolonged biological activity. The complex with AFM may represent the physiological form in body fluids. Interacts with PORCN. Interacts with WLS. Post-translationally, palmitoleoylation is required for efficient binding to frizzled receptors. Depalmitoleoylation leads to Wnt signaling pathway inhibition. As to expression, detected at low levels in adult brain. Dorsal portion of the neural tube, dorsal ectoderm, the branchial arches, and the limb buds.

Its subcellular location is the secreted. It localises to the extracellular space. The protein localises to the extracellular matrix. In terms of biological role, ligand for members of the frizzled family of seven transmembrane receptors. Functions in the canonical Wnt signaling pathway that results in activation of transcription factors of the TCF/LEF family. Required for normal gastrulation, formation of the primitive streak, and for the formation of the mesoderm during early embryogenesis. Required for normal formation of the apical ectodermal ridge and for normal embryonic limb development. This Mus musculus (Mouse) protein is Proto-oncogene Wnt-3 (Wnt3).